The chain runs to 251 residues: Hydroxyacylglutathione hydrolase (251 aa).

Positions 53, 55, 57, 58, 110, 127, and 165 each coordinate Zn(2+).

It belongs to the metallo-beta-lactamase superfamily. Glyoxalase II family. In terms of assembly, monomer. Requires Zn(2+) as cofactor.

It catalyses the reaction an S-(2-hydroxyacyl)glutathione + H2O = a 2-hydroxy carboxylate + glutathione + H(+). Its pathway is secondary metabolite metabolism; methylglyoxal degradation; (R)-lactate from methylglyoxal: step 2/2. Functionally, thiolesterase that catalyzes the hydrolysis of S-D-lactoyl-glutathione to form glutathione and D-lactic acid. This chain is Hydroxyacylglutathione hydrolase, found in Pectobacterium atrosepticum (strain SCRI 1043 / ATCC BAA-672) (Erwinia carotovora subsp. atroseptica).